The chain runs to 370 residues: Histidinol-phosphate aminotransferase 1 (370 aa).

K229 carries the post-translational modification N6-(pyridoxal phosphate)lysine.

The protein belongs to the class-II pyridoxal-phosphate-dependent aminotransferase family. Histidinol-phosphate aminotransferase subfamily. Homodimer. It depends on pyridoxal 5'-phosphate as a cofactor.

The catalysed reaction is L-histidinol phosphate + 2-oxoglutarate = 3-(imidazol-4-yl)-2-oxopropyl phosphate + L-glutamate. It functions in the pathway amino-acid biosynthesis; L-histidine biosynthesis; L-histidine from 5-phospho-alpha-D-ribose 1-diphosphate: step 7/9. The sequence is that of Histidinol-phosphate aminotransferase 1 from Nitrosococcus oceani (strain ATCC 19707 / BCRC 17464 / JCM 30415 / NCIMB 11848 / C-107).